We begin with the raw amino-acid sequence, 273 residues long: L-fucose dehydrogenase (273 aa).

NAD(+)-binding residues include Arg19, Ile21, Asp40, Lys41, Asp62, Val63, Asn89, Tyr154, Lys158, Ile187, Thr189, and Leu191. Tyr154 serves as the catalytic Proton acceptor.

This sequence belongs to the short-chain dehydrogenases/reductases (SDR) family. Homotetramer.

It localises to the cytoplasm. The catalysed reaction is L-fucose + NAD(+) = L-fucono-1,5-lactone + NADH + H(+). It catalyses the reaction D-arabinose + NAD(+) = D-arabinono-1,5-lactone + NADH + H(+). It carries out the reaction L-galactose + NAD(+) = L-galactono-1,5-lactone + NADH + H(+). It functions in the pathway carbohydrate degradation; L-fucose degradation. Its function is as follows. Catalyzes the NAD(+)-dependent oxidation of L-fucose, yielding L-fucono-1,5-lactone, which rapidly converts spontaneously to L-fucone-1,4-lactone. Can also act on D-arabinose and L-galactose, with lower catalytic efficiency. Does not use NADPH. May be the initial enzyme of the putative L-fucose degradation pathway in mammals. This chain is L-fucose dehydrogenase, found in Mus musculus (Mouse).